A 422-amino-acid chain; its full sequence is Nucleoside transporter 1 (422 aa).

Residues 1–38 lie on the Cytoplasmic side of the membrane; sequence MSTGKESSKAYADIESRGDYKDDGKKGSTLSSKQHFML. Residues 39 to 59 traverse the membrane as a helical segment; that stretch reads SLTFILIGLSSLNVWNTALGL. W53 lines the inosine pocket. Topologically, residues 60 to 63 are extracellular; it reads NINF. A helical transmembrane segment spans residues 64 to 82; the sequence is KYNTFQITGLVCSSIVALF. Residues 83–87 are Cytoplasmic-facing; the sequence is VEIPK. The helical transmembrane segment at 88 to 107 threads the bilayer; the sequence is IMLPFLLGGLSILCAGFQIS. The Extracellular segment spans residues 108–116; that stretch reads HSFFTDTQF. A helical transmembrane segment spans residues 117–139; it reads DTYCLVAFIVIGVVAGLAQTIAF. Inosine is bound at residue Q135. Topologically, residues 140-149 are cytoplasmic; the sequence is NIGSTMEDNM. Residues 150–174 form a helical membrane-spanning segment; that stretch reads GGYMSAGIGISGVFIFVINLLLDQF. Topologically, residues 175-185 are extracellular; that stretch reads VSPEKHYGVNK. Residues 186–208 form a helical membrane-spanning segment; sequence AKLLYLYIICELCLILAIVFCVC. Over 209-241 the chain is Cytoplasmic; the sequence is NLDLTNKNNKKDEENKENNATLSYMELFKDSYK. Residues 242 to 265 form a helical membrane-spanning segment; the sequence is AILTMFLVNWLTLQLFPGVGHKKW. Over 266–274 the chain is Extracellular; sequence QESHNISDY. Residues 275–294 traverse the membrane as a helical segment; the sequence is NVTIIVGMFQVFDFLSRYPP. Inosine is bound by residues D287 and R291. Residues 295 to 309 are Cytoplasmic-facing; that stretch reads NLTHIKIFKNFTFSL. A helical transmembrane segment spans residues 310–330; sequence NKLLVANSLRLLFIPWFILNA. Topologically, residues 331–338 are extracellular; sequence CVDHPFFK. A helical membrane pass occupies residues 339 to 362; it reads NIVQQCVCMAMLAFTNGWFNTVPF. Over 363–374 the chain is Cytoplasmic; sequence LVFVKELKKAKK. A helical membrane pass occupies residues 375–397; sequence KKEIEIISTFLVIAMFVGLFCGI. Residues 398–422 lie on the Extracellular side of the membrane; it reads WTTYIYNLFNIVLPKPDLPPIDVTQ.

It belongs to the SLC29A/ENT transporter (TC 2.A.57) family.

It localises to the cell membrane. The enzyme catalyses inosine(in) = inosine(out). The catalysed reaction is adenosine(in) = adenosine(out). It catalyses the reaction hypoxanthine(out) = hypoxanthine(in). It carries out the reaction guanosine(in) = guanosine(out). The enzyme catalyses guanine(out) = guanine(in). The catalysed reaction is thymidine(in) = thymidine(out). It catalyses the reaction uridine(out) = uridine(in). It carries out the reaction uracil(in) = uracil(out). The enzyme catalyses thymine(out) = thymine(in). The catalysed reaction is adenine(out) = adenine(in). It catalyses the reaction cytosine(out) = cytosine(in). It carries out the reaction xanthine(out) = xanthine(in). GSK4 (5-methyl-N-[2-(2-oxo-1-azepanyl)ethyl]-2-phenyl-1,3-oxazole-4-carbox-amide) disrupts the transport activity at 500 nM. Inhibited partially by 10 uM dipyridamole. Inhibited partially by N,N'-1,3-benzothiazole-2,6-diyldi(2-furamide), 2-bromo-N-(4-[1,3]oxazolo[4,5-b]pyridin-2-ylphenyl)benzamide, 4-methyl-7-[(3,4,5-trimethoxybenzyl)oxy]-2H-chromen-2-one, 2-(1-methyl-1H-indol-3-yl)-2-oxo-N-[4-(pyrrolidin-1-ylcarbonyl)phenyl]acet amide and 2-[2-(2-methylphenyl)vinyl]-4(3H)-quinazolinone. In terms of biological role, sodium-independent nucleoside and nucleobase transporter with a broad substrate specificity. Plays a key role in the utilization of host purine sources by P.falciparum during intraerythrocytic development enabling parasite growth in the presence of physiological concentrations of adenosine, inosine, guanine, guanosine, xanthine and hypoxanthine. Essential for parasite transition from ring to trophozoite or from trophozoite to schizont stage but not for erythrocyte invasion by merozoites. The polypeptide is Nucleoside transporter 1 (Plasmodium falciparum (isolate 3D7)).